Reading from the N-terminus, the 415-residue chain is Beta-1,4-glucuronyltransferase 1 (415 aa).

The Cytoplasmic portion of the chain corresponds to 1–8 (MQMSYAIR). The chain crosses the membrane as a helical; Signal-anchor for type II membrane protein span at residues 9–36 (CAFYQLLLAALMLVAMLQLLYLSLLSGL). The Lumenal segment spans residues 37–415 (HGQEEQDQYF…AKYPNSPRRC (379 aa)). N-linked (GlcNAc...) asparagine glycosylation is present at Asn204. Positions 227 and 229 each coordinate Mn(2+). The N-linked (GlcNAc...) asparagine glycan is linked to Asn300.

It belongs to the glycosyltransferase 49 family. Interacts with LARGE1 and LARGE2. Mn(2+) serves as cofactor. In the adult, highly expressed in heart, brain, skeletal muscle and kidney and to a lesser extent in placenta, pancreas, spleen, prostate, testis, ovary, small intestine and colon. Very weak expression in lung, liver, thymus and peripheral blood leukocytes. In fetal highly expressed in brain and kidney and to a lesser extent in lung and liver.

The protein resides in the golgi apparatus membrane. It catalyses the reaction 3-O-[beta-D-Xyl-(1-&gt;4)-Rib-ol-P-Rib-ol-P-3-beta-D-GalNAc-(1-&gt;3)-beta-D-GlcNAc-(1-&gt;4)-(O-6-P-alpha-D-Man)]-Thr-[protein] + UDP-alpha-D-glucuronate = 3-O-[beta-D-GlcA-(1-&gt;3)-beta-D-Xyl-(1-&gt;4)-Rib-ol-P-Rib-ol-P-3-beta-D-GalNAc-(1-&gt;3)-beta-D-GlcNAc-(1-&gt;4)-(O-6-P-alpha-D-Man)]-Thr-[protein] + UDP + H(+). It functions in the pathway protein modification; protein glycosylation. In terms of biological role, beta-1,4-glucuronyltransferase involved in O-mannosylation of alpha-dystroglycan (DAG1). Transfers a glucuronic acid (GlcA) residue onto a xylose (Xyl) acceptor to produce the glucuronyl-beta-1,4-xylose-beta disaccharide primer, which is further elongated by LARGE1, during synthesis of phosphorylated O-mannosyl glycan. Phosphorylated O-mannosyl glycan is a carbohydrate structure present in alpha-dystroglycan (DAG1), which is required for binding laminin G-like domain-containing extracellular proteins with high affinity. Required for axon guidance; via its function in O-mannosylation of alpha-dystroglycan (DAG1). The chain is Beta-1,4-glucuronyltransferase 1 from Homo sapiens (Human).